The sequence spans 81 residues: Insect-toxin Cn10 (81 aa).

An N-terminal signal peptide occupies residues 1 to 13 (ITACLVLIGTVCA). The 66-residue stretch at 14–79 (KEGYLVNKST…TYPIPGKTCR (66 aa)) folds into the LCN-type CS-alpha/beta domain. 4 disulfides stabilise this stretch: Cys25–Cys78, Cys29–Cys54, Cys38–Cys59, and Cys42–Cys61. Lys81 is a propeptide (removed by a carboxypeptidase).

It belongs to the long (4 C-C) scorpion toxin superfamily. Sodium channel inhibitor family. Beta subfamily. As to expression, expressed by the venom gland.

It is found in the secreted. Its function is as follows. Beta toxins bind voltage-independently at site-4 of sodium channels (Nav) and shift the voltage of activation toward more negative potentials thereby affecting sodium channel activation and promoting spontaneous and repetitive firing. Is toxic on insects and crustaceans, but not on mammals. The protein is Insect-toxin Cn10 of Centruroides noxius (Mexican scorpion).